A 1082-amino-acid chain; its full sequence is DNA-directed RNA polymerase subunit beta (1082 aa).

The protein belongs to the RNA polymerase beta chain family. In plastids the minimal PEP RNA polymerase catalytic core is composed of four subunits: alpha, beta, beta', and beta''. When a (nuclear-encoded) sigma factor is associated with the core the holoenzyme is formed, which can initiate transcription.

It localises to the plastid. It is found in the chloroplast. The catalysed reaction is RNA(n) + a ribonucleoside 5'-triphosphate = RNA(n+1) + diphosphate. Functionally, DNA-dependent RNA polymerase catalyzes the transcription of DNA into RNA using the four ribonucleoside triphosphates as substrates. The sequence is that of DNA-directed RNA polymerase subunit beta from Euglena gracilis.